A 327-amino-acid polypeptide reads, in one-letter code: 2-phosphoglycerate kinase (327 aa).

Positions 1–20 (MSEKSSRKERDEKTEKETAR) are enriched in basic and acidic residues. The segment at 1 to 27 (MSEKSSRKERDEKTEKETARQGKHRRI) is disordered. In terms of domain architecture, ATP-cone spans 25 to 111 (RRIRVKSRHY…LWRRIKKREE (87 aa)).

This sequence belongs to the 2-phosphoglycerate kinase family. A divalent metal cation serves as cofactor.

The enzyme catalyses (2R)-2-phosphoglycerate + ATP = (2R)-2,3-bisphosphoglycerate + ADP + H(+). It participates in thermoadapter biosynthesis; cyclic 2,3-diphosphoglycerate biosynthesis; cyclic 2,3-diphosphoglycerate from 2-phospho-D-glycerate: step 1/2. In terms of biological role, catalyzes the phosphorylation of 2-phosphoglycerate to 2,3-diphosphoglycerate. Involved in the biosynthesis of cyclic 2,3-bisphosphoglycerate, a thermoprotectant. The polypeptide is 2-phosphoglycerate kinase (Methanopyrus kandleri (strain AV19 / DSM 6324 / JCM 9639 / NBRC 100938)).